The following is a 143-amino-acid chain: Lysozyme C (143 aa).

Positions 1 to 15 are cleaved as a signal peptide; it reads MKIPVFLLLLALANA. Residues 16–143 enclose the C-type lysozyme domain; it reads KVFQRCEWAR…LSAYIAGCGL (128 aa). 4 disulfides stabilise this stretch: Cys-21-Cys-141, Cys-45-Cys-129, Cys-79-Cys-94, and Cys-90-Cys-108. Residues Glu-50 and Asp-67 contribute to the active site.

The protein belongs to the glycosyl hydrolase 22 family. Monomer.

It is found in the secreted. It catalyses the reaction Hydrolysis of (1-&gt;4)-beta-linkages between N-acetylmuramic acid and N-acetyl-D-glucosamine residues in a peptidoglycan and between N-acetyl-D-glucosamine residues in chitodextrins.. In terms of biological role, lysozymes have primarily a bacteriolytic function; those in tissues and body fluids are associated with the monocyte-macrophage system and enhance the activity of immunoagents. The chain is Lysozyme C from Takifugu rubripes (Japanese pufferfish).